A 1979-amino-acid chain; its full sequence is E3 ubiquitin-protein ligase TTC3 (1979 aa).

The segment at 1-230 (MDDFAEGGLS…RHSCMQCVKQ (230 aa)) is interaction with POLG. TPR repeat units lie at residues 231 to 264 (GELM…RPEN) and 266 to 298 (LLYG…KNTW). S378 carries the phosphoserine modification. The disordered stretch occupies residues 422–457 (CDCHPEFLPPPSQPPRHKGKQKSRNNESEKPSFNSE). TPR repeat units lie at residues 536-572 (VLVV…YPNE) and 576-609 (CLAY…ISRL). The interval 783–811 (LAQERMEEDLRESNPPKNEEPEETSDSAQ) is disordered. The residue at position 1009 (S1009) is a Phosphoserine. 7 disordered regions span residues 1021–1067 (NKGK…GPFA), 1214–1289 (QPDV…EEAK), 1402–1427 (QGSA…SSDS), 1574–1601 (KNDG…DEKT), 1757–1776 (MDSA…GSPT), 1788–1821 (KGAS…KKPS), and 1873–1927 (DEQK…PAPD). The span at 1036–1050 (VGSGAASVAPSSEAV) shows a compositional bias: low complexity. S1060 carries the phosphoserine modification. The span at 1214–1227 (QPDVKSEALSEDVK) shows a compositional bias: basic and acidic residues. The segment covering 1248–1257 (DSDSSSGSAS) has biased composition (low complexity). The span at 1576 to 1586 (DGFDKECEPHP) shows a compositional bias: basic and acidic residues. Composition is skewed to polar residues over residues 1788–1799 (KGASQVSPSEQS) and 1808–1821 (GQAT…KKPS). S1794 bears the Phosphoserine mark. Basic and acidic residues predominate over residues 1873 to 1890 (DEQKKKKPNPGKDKKTSE). Residues 1931 to 1971 (CEICHEIFKSKNMRVLKCGHKFHKGCFKQWLKGQSTCPTCG) form an RING-type; atypical zinc finger.

In terms of assembly, interacts (when phosphorylated on Ser-378) with AKT1, AKT2 and AKT3 (when phosphorylated). Interacts with CIT. Interacts with POLG. Interacts with HSP70. Interacts with SMURF2. In terms of processing, phosphorylation on Ser-378 by Akt is required for ubiquitin ligase activity. Proteolytically cleaved into differently sized N- and C-terminal fragments.

Its subcellular location is the nucleus. The protein resides in the cytoplasm. The protein localises to the golgi apparatus. It carries out the reaction S-ubiquitinyl-[E2 ubiquitin-conjugating enzyme]-L-cysteine + [acceptor protein]-L-lysine = [E2 ubiquitin-conjugating enzyme]-L-cysteine + N(6)-ubiquitinyl-[acceptor protein]-L-lysine.. The protein operates within protein modification; protein ubiquitination. In terms of biological role, E3 ubiquitin-protein ligase which catalyzes the formation of 'Lys-48'-polyubiquitin chains. Mediates the ubiquitination and subsequent degradation of phosphorylated Akt (AKT1, AKT2 and AKT3) in the nucleus. Acts as a terminal regulator of Akt signaling after activation; its phosphorylation by Akt, which is a prerequisite for ubiquitin ligase activity, suggests the existence of a regulation mechanism required to control Akt levels after activation. Positively regulates TGFB1-induced epithelial-mesenchymal transition and myofibroblast differentiation by mediating the ubiquitination and subsequent degradation of SMURF2. Regulates neuronal differentiation by regulating actin remodeling and Golgi organization via a signaling cascade involving RHOA, CIT and ROCK. Inhibits cell proliferation. The chain is E3 ubiquitin-protein ligase TTC3 (Ttc3) from Mus musculus (Mouse).